Reading from the N-terminus, the 350-residue chain is Inner membrane protein YhiM (350 aa).

Residues Met-1–Asn-2 are Cytoplasmic-facing. A helical transmembrane segment spans residues Ile-3 to Leu-23. The Periplasmic portion of the chain corresponds to Gly-24–His-41. The chain crosses the membrane as a helical span at residues Val-42–Ser-62. Residues Gln-63–Thr-74 lie on the Cytoplasmic side of the membrane. Residues Leu-75 to Leu-95 form a helical membrane-spanning segment. The Periplasmic segment spans residues Ala-96–Glu-104. Residues Phe-105–Ala-125 traverse the membrane as a helical segment. Residues Ala-126–Asn-157 lie on the Cytoplasmic side of the membrane. The chain crosses the membrane as a helical span at residues Cys-158–Leu-178. Topologically, residues Arg-179–Gly-190 are periplasmic. Residues His-191–Val-211 form a helical membrane-spanning segment. Residues His-212 to Leu-225 lie on the Cytoplasmic side of the membrane. The helical transmembrane segment at Trp-226–Val-246 threads the bilayer. At Ser-247–Gly-257 the chain is on the periplasmic side. The helical transmembrane segment at Ile-258 to Ala-278 threads the bilayer. Topologically, residues Leu-279 to Arg-290 are cytoplasmic. The helical transmembrane segment at Ile-291–Glu-311 threads the bilayer. Residues Met-312–Arg-324 lie on the Periplasmic side of the membrane. A helical transmembrane segment spans residues Val-325 to Ala-345. Topologically, residues Gly-346 to Lys-350 are cytoplasmic.

The protein localises to the cell inner membrane. In Escherichia coli (strain K12), this protein is Inner membrane protein YhiM (yhiM).